Here is a 207-residue protein sequence, read N- to C-terminus: Superoxide dismutase [Mn] (207 aa).

The Mn(2+) site is built by His28, His76, Asp160, and His164.

The protein belongs to the iron/manganese superoxide dismutase family. Mn(2+) is required as a cofactor.

The protein localises to the secreted. It carries out the reaction 2 superoxide + 2 H(+) = H2O2 + O2. Functionally, destroys superoxide anion radicals which are normally produced within the cells and which are toxic to biological systems. The polypeptide is Superoxide dismutase [Mn] (sodA) (Mycolicibacterium paratuberculosis (strain ATCC BAA-968 / K-10) (Mycobacterium paratuberculosis)).